Here is a 297-residue protein sequence, read N- to C-terminus: Zinc finger protein 784 (297 aa).

A compositionally biased stretch (pro residues) spans 1 to 12 (MAAARPDPPIPS). The segment at 1-39 (MAAARPDPPIPSSPTRESPSPEPPDLVLVPDGRPVTPPG) is disordered. The residue at position 13 (Ser13) is a Phosphoserine. 3 consecutive C2H2-type zinc fingers follow at residues 64-86 (FHCA…EHGH), 100-122 (SRCH…YSLH), and 128-150 (YRCS…QHRH). Residues 149–175 (RHGVEPGTSERLLPTTTTGQPNSRVAQ) are disordered. Polar residues predominate over residues 162 to 173 (PTTTTGQPNSRV). 3 consecutive C2H2-type zinc fingers follow at residues 195 to 217 (FACR…ERVH), 223 to 245 (YHCS…ARIH), and 251 to 273 (FRCM…QRTH). Residues 268–297 (KHQRTHFHGPGSGVGESRGQLRSSSVSQES) are disordered. A compositionally biased stretch (polar residues) spans 287–297 (QLRSSSVSQES).

The protein belongs to the krueppel C2H2-type zinc-finger protein family.

The protein resides in the nucleus. Its function is as follows. May be involved in transcriptional regulation. The protein is Zinc finger protein 784 (Znf784) of Mus musculus (Mouse).